A 500-amino-acid polypeptide reads, in one-letter code: Formate-nitrite transporter 3 (500 aa).

Topologically, residues 1 to 31 (MVLAASPEAYRKVIEYGIKKTKLRIDRLFLQ) are cytoplasmic. A helical membrane pass occupies residues 32 to 52 (AIMAGIYVGMAGHACTALAGA). The Extracellular portion of the chain corresponds to 53–69 (YSTDPANPLAVSKATQK). Residues 70-90 (FLYASLFPVAFIAIIFTGAEL) form a helical membrane-spanning segment. At 91–113 (FTGNTMTMLVCLLERRVTALQLC) the chain is on the cytoplasmic side. Residues 114–134 (INWICSLVGNWAGALFAAYFL) form a helical membrane-spanning segment. Over 135 to 164 (SYLPGVLQDPDHLHYLEDVAAHKTELSFLQ) the chain is Extracellular. A helical transmembrane segment spans residues 165–185 (CFCLAVGCNTFVCLAVWFVIA). Topologically, residues 186–192 (SDDAAGK) are cytoplasmic. Residues 193-213 (IMSMWFPIVSFCVAGYEHIIA) form a helical membrane-spanning segment. At 214–237 (NFYTLQCALMHGVGPGVGTVILKN) the chain is on the extracellular side. Residues 238–258 (FIPTLLGNIVGGCGLVGAVYW) form a helical membrane-spanning segment. The Cytoplasmic segment spans residues 259 to 500 (YNFYPTVCVV…ALEEHPASTI (242 aa)). The disordered stretch occupies residues 411–500 (PLRENSGVPS…ALEEHPASTI (90 aa)). Basic and acidic residues-rich tracts occupy residues 428–444 (GRVRRSSREREPERGGE) and 466–485 (FHPHVPREVEQSSLLEETRV).

This sequence belongs to the FNT transporter (TC 1.A.16) family. As to quaternary structure, homopentamer.

It is found in the cell membrane. The enzyme catalyses (S)-lactate(in) + H(+)(in) = (S)-lactate(out) + H(+)(out). It catalyses the reaction formate(in) + H(+)(in) = formate(out) + H(+)(out). It carries out the reaction pyruvate(out) + H(+)(out) = pyruvate(in) + H(+)(in). The catalysed reaction is acetate(out) + H(+)(out) = acetate(in) + H(+)(in). Inhibited by p-chloromercuribenzene sulfonate (pCMBS). Methyl methanethiosulfonate (MMTS) inhibits L-lactate but not formate transport. Inhibited by the Malaria Box compound MMV007839. Inhibited by BH-296, BH-317, BH-326 and BH-388 compounds. In terms of biological role, monocarboxylate-proton symporter; active in acidic-to-neutral pH range. Transports L-lactate and formate. The polypeptide is Formate-nitrite transporter 3 (Toxoplasma gondii (strain ATCC 50611 / Me49)).